The primary structure comprises 277 residues: Urease accessory protein UreD (277 aa).

Residues 1 to 20 (MRQTAQEDASPAPMQRAHGT) form a disordered region.

The protein belongs to the UreD family. As to quaternary structure, ureD, UreF and UreG form a complex that acts as a GTP-hydrolysis-dependent molecular chaperone, activating the urease apoprotein by helping to assemble the nickel containing metallocenter of UreC. The UreE protein probably delivers the nickel.

It is found in the cytoplasm. Its function is as follows. Required for maturation of urease via the functional incorporation of the urease nickel metallocenter. This chain is Urease accessory protein UreD, found in Chelativorans sp. (strain BNC1).